The chain runs to 166 residues: Small ribosomal subunit protein uS5 (166 aa).

One can recognise an S5 DRBM domain in the interval 12–75; the sequence is YIEKLVQVNR…EAARRNMIQV (64 aa).

It belongs to the universal ribosomal protein uS5 family. In terms of assembly, part of the 30S ribosomal subunit. Contacts proteins S4 and S8.

In terms of biological role, with S4 and S12 plays an important role in translational accuracy. Located at the back of the 30S subunit body where it stabilizes the conformation of the head with respect to the body. The protein is Small ribosomal subunit protein uS5 of Pseudomonas fluorescens (strain Pf0-1).